A 532-amino-acid chain; its full sequence is UDP-N-acetylmuramoylalanine--D-glutamate ligase (532 aa).

124–130 (GSKGKSS) is an ATP binding site.

The protein belongs to the MurCDEF family.

It localises to the cytoplasm. It catalyses the reaction UDP-N-acetyl-alpha-D-muramoyl-L-alanine + D-glutamate + ATP = UDP-N-acetyl-alpha-D-muramoyl-L-alanyl-D-glutamate + ADP + phosphate + H(+). It functions in the pathway cell wall biogenesis; peptidoglycan biosynthesis. Cell wall formation. Catalyzes the addition of glutamate to the nucleotide precursor UDP-N-acetylmuramoyl-L-alanine (UMA). The chain is UDP-N-acetylmuramoylalanine--D-glutamate ligase (murD) from Treponema pallidum (strain Nichols).